Consider the following 248-residue polypeptide: Small ribosomal subunit protein uS3 (248 aa).

The region spanning 39–108 (IRKLVSQKLA…TVAVNVAEIP (70 aa)) is the KH type-2 domain. The segment at 212 to 248 (KTETLARPPRKSDERRREDGERPSRRRPTARRRPGGE) is disordered. Residues 221–234 (RKSDERRREDGERP) are compositionally biased toward basic and acidic residues. The span at 235 to 248 (SRRRPTARRRPGGE) shows a compositional bias: basic residues.

This sequence belongs to the universal ribosomal protein uS3 family. In terms of assembly, part of the 30S ribosomal subunit. Forms a tight complex with proteins S10 and S14.

In terms of biological role, binds the lower part of the 30S subunit head. Binds mRNA in the 70S ribosome, positioning it for translation. This is Small ribosomal subunit protein uS3 from Deinococcus geothermalis (strain DSM 11300 / CIP 105573 / AG-3a).